The primary structure comprises 749 residues: Poly(U)-binding-splicing factor rnp-6 (749 aa).

RRM domains are found at residues 102-176 (SRIY…LKVN) and 207-285 (FRVY…KCVT). 2 disordered regions span residues 323–388 (AGSS…PDVV) and 457–480 (IEEE…KMKR). Low complexity predominate over residues 330 to 354 (PSESGGSRAASPAPRAQSPATPSSS). The RRM 3; atypical domain maps to 658 to 739 (NVIVLRNMVT…NTVKAEAYDQ (82 aa)).

Belongs to the RRM half pint family.

It localises to the nucleus. DNA- and RNA-binding protein, involved in several nuclear processes such as pre-mRNA splicing, apoptosis and transcription regulation. Ensures the correct splicing of genes involved in immunity to promote longevity in response to infection by pathogenic bacteria such as S.aureus. The polypeptide is Poly(U)-binding-splicing factor rnp-6 (Caenorhabditis elegans).